The primary structure comprises 648 residues: Macrolide export ATP-binding/permease protein MacB (648 aa).

Residues 5–243 form the ABC transporter domain; it reads LELKDIRRSY…AGGTEPVVNT (239 aa). Residue 41-48 coordinates ATP; it reads GASGSGKS. The next 4 membrane-spanning stretches (helical) occupy residues 273–293, 523–543, 576–596, and 600–620; these read LLTM…VVVG, LFLT…VMNI, AVLV…LIAF, and LFLP…AFLC.

It belongs to the ABC transporter superfamily. Macrolide exporter (TC 3.A.1.122) family. In terms of assembly, homodimer. Part of the tripartite efflux system MacAB-TolC, which is composed of an inner membrane transporter, MacB, a periplasmic membrane fusion protein, MacA, and an outer membrane component, TolC. The complex forms a large protein conduit and can translocate molecules across both the inner and outer membranes. Interacts with MacA.

It localises to the cell inner membrane. Part of the tripartite efflux system MacAB-TolC. MacB is a non-canonical ABC transporter that contains transmembrane domains (TMD), which form a pore in the inner membrane, and an ATP-binding domain (NBD), which is responsible for energy generation. Confers resistance against macrolides. This is Macrolide export ATP-binding/permease protein MacB from Shigella flexneri.